We begin with the raw amino-acid sequence, 299 residues long: Polyamine aminopropyltransferase (299 aa).

One can recognise a PABS domain in the interval 6 to 252 (IVLLFALLCT…SLPNQQALQQ (247 aa)). S-methyl-5'-thioadenosine contacts are provided by residues Gln36, Glu120, and 147–148 (DA). Asp168 serves as the catalytic Proton acceptor.

Belongs to the spermidine/spermine synthase family. As to quaternary structure, homodimer or homotetramer.

Its subcellular location is the cytoplasm. It catalyses the reaction S-adenosyl 3-(methylsulfanyl)propylamine + putrescine = S-methyl-5'-thioadenosine + spermidine + H(+). It functions in the pathway amine and polyamine biosynthesis; spermidine biosynthesis; spermidine from putrescine: step 1/1. In terms of biological role, catalyzes the irreversible transfer of a propylamine group from the amino donor S-adenosylmethioninamine (decarboxy-AdoMet) to putrescine (1,4-diaminobutane) to yield spermidine. The protein is Polyamine aminopropyltransferase of Vibrio vulnificus (strain CMCP6).